Reading from the N-terminus, the 346-residue chain is Phenylalanine--tRNA ligase alpha subunit (346 aa).

A Mg(2+)-binding site is contributed by Glu261.

Belongs to the class-II aminoacyl-tRNA synthetase family. Phe-tRNA synthetase alpha subunit type 1 subfamily. As to quaternary structure, tetramer of two alpha and two beta subunits. It depends on Mg(2+) as a cofactor.

It is found in the cytoplasm. The enzyme catalyses tRNA(Phe) + L-phenylalanine + ATP = L-phenylalanyl-tRNA(Phe) + AMP + diphosphate + H(+). The polypeptide is Phenylalanine--tRNA ligase alpha subunit (Streptococcus agalactiae serotype Ia (strain ATCC 27591 / A909 / CDC SS700)).